The following is a 940-amino-acid chain: Gamma-aminobutyric acid type B receptor subunit 2 (940 aa).

Positions 1 to 40 are cleaved as a signal peptide; it reads MASPPSSGQPRPPPPPPPPARLLLPLLLSLLLSLAPGAWG. Topologically, residues 41 to 482 are extracellular; the sequence is WARGAPRPPP…LRKISLPLYS (442 aa). N-linked (GlcNAc...) asparagine glycosylation occurs at Asn-89. 3 cysteine pairs are disulfide-bonded: Cys-107-Cys-134, Cys-236-Cys-265, and Cys-264-Cys-301. Residues Asn-297, Asn-388, Asn-403, and Asn-452 are each glycosylated (N-linked (GlcNAc...) asparagine). The chain crosses the membrane as a helical span at residues 483 to 503; the sequence is ILSALTILGMIMASAFLFFNI. Topologically, residues 504 to 521 are cytoplasmic; the sequence is KNRNQKLIKMSSPYMNNL. A helical membrane pass occupies residues 522–542; that stretch reads IILGGMLSYASIFLFGLDGSF. Residues 543–550 are Extracellular-facing; that stretch reads VSEKTFET. A helical transmembrane segment spans residues 551–571; the sequence is LCTVRTWILTVGYTTAFGAMF. The Cytoplasmic segment spans residues 572–596; sequence AKTWRVHAIFKNVKMKKKIIKDQKL. The chain crosses the membrane as a helical span at residues 597–617; it reads LVIVGGMLLIDLCILICWQAV. At 618–653 the chain is on the extracellular side; the sequence is DPLRRTVERYSMEPDPAGRDISIRPLLEHCENTHMT. A helical transmembrane segment spans residues 654-674; that stretch reads IWLGIVYAYKGLLMLFGCFLA. The Cytoplasmic portion of the chain corresponds to 675–690; it reads WETRNVSIPALNDSKY. The chain crosses the membrane as a helical span at residues 691–711; the sequence is IGMSVYNVGIMCIIGAAVSFL. At 712-719 the chain is on the extracellular side; sequence TRDQPNVQ. The chain crosses the membrane as a helical span at residues 720–740; it reads FCIVALVIIFCSTITLCLVFV. Topologically, residues 741–940 are cytoplasmic; it reads PKLITLRTNP…PSFRVMVSGL (200 aa). Residues 762 to 789 are disordered; it reads TQNQKKEDSKTSTSVTSVNQASTSRLEG. Over residues 772–786 the composition is skewed to polar residues; sequence TSTSVTSVNQASTSR. Phosphoserine is present on residues Ser-775 and Ser-778. Residues 781 to 818 adopt a coiled-coil conformation; that stretch reads QASTSRLEGLQSENHRLRMKITELDKDLEEVTMQLQDT. At Thr-818 the chain carries Phosphothreonine. A phosphoserine mark is found at Ser-883, Ser-892, Ser-912, Ser-915, Ser-919, and Ser-923.

It belongs to the G-protein coupled receptor 3 family. GABA-B receptor subfamily. In terms of assembly, heterodimer of GABBR1 and GABBR2. Homodimers may form, but are inactive. Interacts (via C-terminus) with ATF4 (via leucine zipper domain).

The protein localises to the cell membrane. The protein resides in the postsynaptic cell membrane. Functionally, component of a heterodimeric G-protein coupled receptor for GABA, formed by GABBR1 and GABBR2. Within the heterodimeric GABA receptor, only GABBR1 seems to bind agonists, while GABBR2 mediates coupling to G proteins. Ligand binding causes a conformation change that triggers signaling via guanine nucleotide-binding proteins (G proteins) and modulates the activity of down-stream effectors, such as adenylate cyclase. Signaling inhibits adenylate cyclase, stimulates phospholipase A2, activates potassium channels, inactivates voltage-dependent calcium-channels and modulates inositol phospholipid hydrolysis. Plays a critical role in the fine-tuning of inhibitory synaptic transmission. Pre-synaptic GABA receptor inhibits neurotransmitter release by down-regulating high-voltage activated calcium channels, whereas postsynaptic GABA receptor decreases neuronal excitability by activating a prominent inwardly rectifying potassium (Kir) conductance that underlies the late inhibitory postsynaptic potentials. Not only implicated in synaptic inhibition but also in hippocampal long-term potentiation, slow wave sleep, muscle relaxation and antinociception. Interacts with KCTD8, KCTD12 and KCTD16; this interaction determines the pharmacology and kinetics of the receptor response, the KCTD proteins markedly accelerating the GABA-B response, although to different extents. This Mus musculus (Mouse) protein is Gamma-aminobutyric acid type B receptor subunit 2 (Gabbr2).